A 256-amino-acid polypeptide reads, in one-letter code: Imidazole glycerol phosphate synthase subunit HisF (256 aa).

Residues Asp-11 and Asp-130 contribute to the active site.

It belongs to the HisA/HisF family. In terms of assembly, heterodimer of HisH and HisF.

The protein resides in the cytoplasm. The catalysed reaction is 5-[(5-phospho-1-deoxy-D-ribulos-1-ylimino)methylamino]-1-(5-phospho-beta-D-ribosyl)imidazole-4-carboxamide + L-glutamine = D-erythro-1-(imidazol-4-yl)glycerol 3-phosphate + 5-amino-1-(5-phospho-beta-D-ribosyl)imidazole-4-carboxamide + L-glutamate + H(+). The protein operates within amino-acid biosynthesis; L-histidine biosynthesis; L-histidine from 5-phospho-alpha-D-ribose 1-diphosphate: step 5/9. IGPS catalyzes the conversion of PRFAR and glutamine to IGP, AICAR and glutamate. The HisF subunit catalyzes the cyclization activity that produces IGP and AICAR from PRFAR using the ammonia provided by the HisH subunit. The protein is Imidazole glycerol phosphate synthase subunit HisF of Cupriavidus necator (strain ATCC 17699 / DSM 428 / KCTC 22496 / NCIMB 10442 / H16 / Stanier 337) (Ralstonia eutropha).